A 137-amino-acid chain; its full sequence is Large ribosomal subunit protein uL16c (137 aa).

This sequence belongs to the universal ribosomal protein uL16 family. In terms of assembly, part of the 50S ribosomal subunit.

The protein localises to the plastid. This Aneura mirabilis (Parasitic liverwort) protein is Large ribosomal subunit protein uL16c.